The sequence spans 456 residues: Enolase (456 aa).

(2R)-2-phosphoglycerate is bound at residue Gln-164. The active-site Proton donor is the Glu-207. Residues Asp-244, Glu-287, and Asp-314 each coordinate Mg(2+). (2R)-2-phosphoglycerate is bound by residues Lys-339, Arg-368, Ser-369, and Lys-390. The active-site Proton acceptor is the Lys-339.

This sequence belongs to the enolase family. As to quaternary structure, component of the RNA degradosome, a multiprotein complex involved in RNA processing and mRNA degradation. Mg(2+) serves as cofactor.

Its subcellular location is the cytoplasm. It localises to the secreted. It is found in the cell surface. It carries out the reaction (2R)-2-phosphoglycerate = phosphoenolpyruvate + H2O. The protein operates within carbohydrate degradation; glycolysis; pyruvate from D-glyceraldehyde 3-phosphate: step 4/5. Its function is as follows. Catalyzes the reversible conversion of 2-phosphoglycerate (2-PG) into phosphoenolpyruvate (PEP). It is essential for the degradation of carbohydrates via glycolysis. The chain is Enolase from Francisella tularensis subsp. holarctica (strain OSU18).